We begin with the raw amino-acid sequence, 419 residues long: Pyrophosphate--fructose 6-phosphate 1-phosphotransferase (419 aa).

Gly-13 is a diphosphate binding site. Substrate contacts are provided by residues 142–144 (TVD), 190–192 (MGR), Glu-247, and 297–300 (YLQR). The active-site Proton acceptor is Asp-144.

This sequence belongs to the phosphofructokinase type A (PFKA) family. PPi-dependent PFK group II subfamily. Clade 'B2' sub-subfamily. Homodimer. Requires Mg(2+) as cofactor.

It localises to the cytoplasm. It catalyses the reaction beta-D-fructose 6-phosphate + diphosphate = beta-D-fructose 1,6-bisphosphate + phosphate + H(+). The protein operates within carbohydrate degradation; glycolysis; D-glyceraldehyde 3-phosphate and glycerone phosphate from D-glucose: step 3/4. With respect to regulation, non-allosteric. Its function is as follows. Catalyzes the phosphorylation of D-fructose 6-phosphate, the first committing step of glycolysis. Uses inorganic phosphate (PPi) as phosphoryl donor instead of ATP like common ATP-dependent phosphofructokinases (ATP-PFKs), which renders the reaction reversible, and can thus function both in glycolysis and gluconeogenesis. Consistently, PPi-PFK can replace the enzymes of both the forward (ATP-PFK) and reverse (fructose-bisphosphatase (FBPase)) reactions. This chain is Pyrophosphate--fructose 6-phosphate 1-phosphotransferase, found in Halomonas elongata (strain ATCC 33173 / DSM 2581 / NBRC 15536 / NCIMB 2198 / 1H9).